We begin with the raw amino-acid sequence, 392 residues long: Potassium/proton antiporter CemA (392 aa).

The next 4 helical transmembrane spans lie at Phe174–Leu194, Ser269–Leu289, Phe316–Ile336, and Phe352–Ile372.

This sequence belongs to the CemA family.

Its subcellular location is the plastid. The protein resides in the chloroplast inner membrane. The enzyme catalyses K(+)(in) + H(+)(out) = K(+)(out) + H(+)(in). Functionally, contributes to K(+)/H(+) antiport activity by supporting proton efflux to control proton extrusion and homeostasis in chloroplasts in a light-dependent manner to modulate photosynthesis. Prevents excessive induction of non-photochemical quenching (NPQ) under continuous-light conditions. Indirectly promotes efficient inorganic carbon uptake into chloroplasts. The protein is Potassium/proton antiporter CemA of Nephroselmis olivacea (Green alga).